The primary structure comprises 127 residues: Protein ApaG (127 aa).

Residues 2–127 (SELVEHIQVH…FRLAGPNQVH (126 aa)) enclose the ApaG domain.

The protein is Protein ApaG of Chromohalobacter salexigens (strain ATCC BAA-138 / DSM 3043 / CIP 106854 / NCIMB 13768 / 1H11).